A 478-amino-acid chain; its full sequence is Cysteine--tRNA ligase (478 aa).

Zn(2+) is bound at residue Cys-29. The 'HIGH' region signature appears at 31–41 (PTVYDIPHIGN). Zn(2+) contacts are provided by Cys-216, His-241, and Glu-245. Positions 274 to 278 (KMSKS) match the 'KMSKS' region motif. Position 277 (Lys-277) interacts with ATP.

It belongs to the class-I aminoacyl-tRNA synthetase family. Monomer. The cofactor is Zn(2+).

The protein resides in the cytoplasm. It catalyses the reaction tRNA(Cys) + L-cysteine + ATP = L-cysteinyl-tRNA(Cys) + AMP + diphosphate. In Orientia tsutsugamushi (strain Ikeda) (Rickettsia tsutsugamushi), this protein is Cysteine--tRNA ligase.